A 259-amino-acid polypeptide reads, in one-letter code: 3-oxo-5-alpha-steroid 4-dehydrogenase 1 (259 aa).

Helical transmembrane passes span 12 to 29, 86 to 106, 111 to 131, 151 to 171, and 209 to 229; these read LLAA…AVFA, ILLA…PFLM, PMPL…GYLQ, FLIG…SDHI, and YALA…FCFL.

Belongs to the steroid 5-alpha reductase family. As to expression, liver and prostate (at a low level).

The protein resides in the microsome membrane. It is found in the endoplasmic reticulum membrane. The enzyme catalyses a 3-oxo-5alpha-steroid + NADP(+) = a 3-oxo-Delta(4)-steroid + NADPH + H(+). The catalysed reaction is androst-4-ene-3,17-dione + NADPH + H(+) = 5alpha-androstan-3,17-dione + NADP(+). It catalyses the reaction 5alpha-pregnane-3,20-dione + NADP(+) = progesterone + NADPH + H(+). It carries out the reaction 17beta-hydroxy-5alpha-androstan-3-one + NADP(+) = testosterone + NADPH + H(+). Functionally, converts testosterone into 5-alpha-dihydrotestosterone and progesterone or corticosterone into their corresponding 5-alpha-3-oxosteroids. It plays a central role in sexual differentiation and androgen physiology. In Homo sapiens (Human), this protein is 3-oxo-5-alpha-steroid 4-dehydrogenase 1.